Reading from the N-terminus, the 456-residue chain is Bifunctional protein GlmU (456 aa).

Residues 1 to 229 form a pyrophosphorylase region; the sequence is MSTSPLSVVI…LSEVEGVNNR (229 aa). UDP-N-acetyl-alpha-D-glucosamine-binding positions include 11–14, lysine 25, glutamine 76, 81–82, 103–105, glycine 140, glutamate 154, asparagine 169, and asparagine 227; these read LAAG, GT, and YGD. Residue aspartate 105 participates in Mg(2+) binding. Residue asparagine 227 coordinates Mg(2+). The linker stretch occupies residues 230–250; that stretch reads LQLSALERAYQQQQAQRLLLA. Residues 251-456 are N-acetyltransferase; that stretch reads GVMLTDPARF…SGWERPVKKK (206 aa). Residues arginine 333 and lysine 351 each coordinate UDP-N-acetyl-alpha-D-glucosamine. The active-site Proton acceptor is histidine 363. UDP-N-acetyl-alpha-D-glucosamine contacts are provided by tyrosine 366 and asparagine 377. Residues alanine 380, 386–387, serine 405, alanine 423, and arginine 440 each bind acetyl-CoA; that span reads NY.

In the N-terminal section; belongs to the N-acetylglucosamine-1-phosphate uridyltransferase family. The protein in the C-terminal section; belongs to the transferase hexapeptide repeat family. In terms of assembly, homotrimer. The cofactor is Mg(2+).

The protein resides in the cytoplasm. It carries out the reaction alpha-D-glucosamine 1-phosphate + acetyl-CoA = N-acetyl-alpha-D-glucosamine 1-phosphate + CoA + H(+). The catalysed reaction is N-acetyl-alpha-D-glucosamine 1-phosphate + UTP + H(+) = UDP-N-acetyl-alpha-D-glucosamine + diphosphate. The protein operates within nucleotide-sugar biosynthesis; UDP-N-acetyl-alpha-D-glucosamine biosynthesis; N-acetyl-alpha-D-glucosamine 1-phosphate from alpha-D-glucosamine 6-phosphate (route II): step 2/2. It participates in nucleotide-sugar biosynthesis; UDP-N-acetyl-alpha-D-glucosamine biosynthesis; UDP-N-acetyl-alpha-D-glucosamine from N-acetyl-alpha-D-glucosamine 1-phosphate: step 1/1. Its pathway is bacterial outer membrane biogenesis; LPS lipid A biosynthesis. Catalyzes the last two sequential reactions in the de novo biosynthetic pathway for UDP-N-acetylglucosamine (UDP-GlcNAc). The C-terminal domain catalyzes the transfer of acetyl group from acetyl coenzyme A to glucosamine-1-phosphate (GlcN-1-P) to produce N-acetylglucosamine-1-phosphate (GlcNAc-1-P), which is converted into UDP-GlcNAc by the transfer of uridine 5-monophosphate (from uridine 5-triphosphate), a reaction catalyzed by the N-terminal domain. The sequence is that of Bifunctional protein GlmU from Edwardsiella ictaluri (strain 93-146).